We begin with the raw amino-acid sequence, 23 residues long: Alyteserin-1d (23 aa).

Asn-23 carries the asparagine amide modification.

In terms of tissue distribution, expressed by the skin glands.

It localises to the secreted. The protein resides in the target cell membrane. Functionally, antibacterial peptide with amphipathic alpha-helical structure. Shows selective growth inhibitory activity against the Gram-negative bacteria E.coli (MIC=25 uM) Has a weak hemolytic activity against human erythrocytes (LC(50)&gt;100 uM). Is very weakly active against S.aureus (MIC=200 uM). This is Alyteserin-1d from Alytes obstetricans (Common midwife toad).